A 209-amino-acid polypeptide reads, in one-letter code: Dehydration-responsive element-binding protein 1F (209 aa).

A Nuclear localization signal motif is present at residues 14-26 (KKRAGRRVFKETR). A DNA-binding region (AP2/ERF) is located at residues 29–86 (VYRGIRRRNGDKWVCEVREPTHQRRIWLGTYPTADMAARAHDVAVLALRGRSACLNFA). The interval 137 to 157 (FGSGSGSGSGSEERNSSSYGF) is disordered.

The protein belongs to the AP2/ERF transcription factor family. ERF subfamily.

It localises to the nucleus. Transcriptional activator that binds specifically to the DNA sequence 5'-[AG]CCGAC-3'. Binding to the C-repeat/DRE element mediates cold or dehydration-inducible transcription. CBF/DREB1 factors play a key role in freezing tolerance and cold acclimation. This is Dehydration-responsive element-binding protein 1F (DREB1F) from Arabidopsis thaliana (Mouse-ear cress).